Reading from the N-terminus, the 176-residue chain is Flavodoxin 1 (176 aa).

The Flavodoxin-like domain occupies 4-165 (TGIFFGSDTG…RVEKWVKQVS (162 aa)).

Belongs to the flavodoxin family. FMN is required as a cofactor.

In terms of biological role, low-potential electron donor to a number of redox enzymes (Potential). Involved in the reactivation of inactive cob(II)alamin in methionine synthase. The polypeptide is Flavodoxin 1 (fldA) (Salmonella typhimurium (strain LT2 / SGSC1412 / ATCC 700720)).